The sequence spans 239 residues: Glucosamine-6-phosphate deaminase (239 aa).

Asp62 acts as the Proton acceptor; for enolization step in catalysis. Catalysis depends on Asn128, which acts as the For ring-opening step. Catalysis depends on His130, which acts as the Proton acceptor; for ring-opening step. The For ring-opening step role is filled by Glu135.

This sequence belongs to the glucosamine/galactosamine-6-phosphate isomerase family. NagB subfamily.

The catalysed reaction is alpha-D-glucosamine 6-phosphate + H2O = beta-D-fructose 6-phosphate + NH4(+). It functions in the pathway amino-sugar metabolism; N-acetylneuraminate degradation; D-fructose 6-phosphate from N-acetylneuraminate: step 5/5. In terms of biological role, catalyzes the reversible isomerization-deamination of glucosamine 6-phosphate (GlcN6P) to form fructose 6-phosphate (Fru6P) and ammonium ion. This chain is Glucosamine-6-phosphate deaminase, found in Lactobacillus acidophilus (strain ATCC 700396 / NCK56 / N2 / NCFM).